A 98-amino-acid chain; its full sequence is NADH-ubiquinone oxidoreductase chain 4L (98 aa).

The next 3 membrane-spanning stretches (helical) occupy residues 2 to 22, 26 to 46, and 59 to 79; these read QMTMINMILAFIMATTGLLMF, FMSSLLCLEGMMLSIFILMSI, and FPLVLLVFAACEAAIGLSLLV.

It belongs to the complex I subunit 4L family. As to quaternary structure, core subunit of respiratory chain NADH dehydrogenase (Complex I) which is composed of 45 different subunits.

The protein localises to the mitochondrion inner membrane. It carries out the reaction a ubiquinone + NADH + 5 H(+)(in) = a ubiquinol + NAD(+) + 4 H(+)(out). Its function is as follows. Core subunit of the mitochondrial membrane respiratory chain NADH dehydrogenase (Complex I) which catalyzes electron transfer from NADH through the respiratory chain, using ubiquinone as an electron acceptor. Part of the enzyme membrane arm which is embedded in the lipid bilayer and involved in proton translocation. This chain is NADH-ubiquinone oxidoreductase chain 4L (MT-ND4L), found in Echinosorex gymnura (Moon rat).